The chain runs to 307 residues: Secondary metabolism regulator LAE1 (307 aa).

Belongs to the methyltransferase superfamily. LaeA methyltransferase family. As to quaternary structure, component of the heterotrimeric velvet complex composed of LAE1, VEL1 and VEL2; VEL1 acting as a bridging protein between LAE1 and VEL2.

It localises to the nucleus. The catalysed reaction is L-methionyl-[protein] + S-adenosyl-L-methionine = S-methyl-L-methionyl-[protein] + S-adenosyl-L-homocysteine. Its function is as follows. Methyltransferase that performs automethylation. No other methyl-accepting substrate has been identified yet. Component of the velvet transcription factor complex that acts as a global regulator for secondary metabolite gene expression. Controls the expression of the T-toxin gene cluster. Promotes oxidative stress tolerance and acts as a virulence factors during infection. Negatively regulate mycelial pigmentation and controls sexual development, as well as asexual development during vegetative growth. The polypeptide is Secondary metabolism regulator LAE1 (Cochliobolus heterostrophus (strain C5 / ATCC 48332 / race O) (Southern corn leaf blight fungus)).